Here is a 355-residue protein sequence, read N- to C-terminus: Probable dual-specificity RNA methyltransferase RlmN (355 aa).

Residue E89 is the Proton acceptor of the active site. The Radical SAM core domain occupies 95 to 322; it reads YENRKTVCLS…KRLGVPTSIR (228 aa). Cysteines 102 and 333 form a disulfide. C109, C113, and C116 together coordinate [4Fe-4S] cluster. Residues 159–160, S191, 214–216, and N290 contribute to the S-adenosyl-L-methionine site; these read GE and SLH. C333 (S-methylcysteine intermediate) is an active-site residue.

This sequence belongs to the radical SAM superfamily. RlmN family. It depends on [4Fe-4S] cluster as a cofactor.

The protein resides in the cytoplasm. The catalysed reaction is adenosine(2503) in 23S rRNA + 2 reduced [2Fe-2S]-[ferredoxin] + 2 S-adenosyl-L-methionine = 2-methyladenosine(2503) in 23S rRNA + 5'-deoxyadenosine + L-methionine + 2 oxidized [2Fe-2S]-[ferredoxin] + S-adenosyl-L-homocysteine. The enzyme catalyses adenosine(37) in tRNA + 2 reduced [2Fe-2S]-[ferredoxin] + 2 S-adenosyl-L-methionine = 2-methyladenosine(37) in tRNA + 5'-deoxyadenosine + L-methionine + 2 oxidized [2Fe-2S]-[ferredoxin] + S-adenosyl-L-homocysteine. Specifically methylates position 2 of adenine 2503 in 23S rRNA and position 2 of adenine 37 in tRNAs. This is Probable dual-specificity RNA methyltransferase RlmN from Thermus thermophilus (strain ATCC 27634 / DSM 579 / HB8).